A 313-amino-acid polypeptide reads, in one-letter code: HTH-type transcriptional regulator CysB (313 aa).

The HTH lysR-type domain maps to methionine 1 to leucine 59. The H-T-H motif DNA-binding region spans leucine 19–isoleucine 38.

Belongs to the LysR transcriptional regulatory family.

Functionally, transcriptional regulator preferentially involved in the control of sulfate transport and reduction. Binds to DNA at target promoter regions. The chain is HTH-type transcriptional regulator CysB from Burkholderia cenocepacia (strain ATCC BAA-245 / DSM 16553 / LMG 16656 / NCTC 13227 / J2315 / CF5610) (Burkholderia cepacia (strain J2315)).